We begin with the raw amino-acid sequence, 575 residues long: Flagellin A (575 aa).

3 repeat units span residues 405–409, 411–415, and 447–450.

The protein belongs to the bacterial flagellin family. Heteromer of flaA and flaB.

It is found in the secreted. It localises to the bacterial flagellum. Its function is as follows. Flagellin is the subunit protein which polymerizes to form the filaments of bacterial flagella. The chain is Flagellin A (flaA) from Campylobacter jejuni.